A 456-amino-acid polypeptide reads, in one-letter code: Putative F-box/FBD/LRR-repeat protein At1g66300 (456 aa).

Positions 1–23 (MDEDGEKRVRTKRLCSPESSDKK) are disordered. In terms of domain architecture, F-box spans 28 to 74 (VDWVRDLPESLICHVLLNLSTKDVIKNCVLSTKWRYLWRYVPGLDLD). LRR repeat units follow at residues 136-163 (HLDL…KLCG), 185-210 (VKFA…TLCR), 234-260 (PNTM…TLSH), and 347-372 (FYED…VVGS). The FBD domain maps to 377 to 429 (MERTSIISGHRCLLSSLEYVEIETPLTGEVFEMKLVSYLLENSPILKKLTIHL).

The sequence is that of Putative F-box/FBD/LRR-repeat protein At1g66300 from Arabidopsis thaliana (Mouse-ear cress).